The chain runs to 295 residues: Very long chain fatty acid elongase 5 (295 aa).

A run of 7 helical transmembrane segments spans residues 26-46, 64-84, 112-132, 150-170, 172-192, 207-223, and 227-247; these read WLLL…LFIV, ILVV…YELV, VLWW…FFIL, MLNI…FFGA, LNSF…IPAI, LTQF…AMIW, and FPMG…ILFT. The interval 265–295 is disordered; that stretch reads YQNGSASAVNGYTNSFSSLEDNVKQRKQRQN. Over residues 266 to 284 the composition is skewed to polar residues; it reads QNGSASAVNGYTNSFSSLE.

The protein belongs to the ELO family. ELOVL5 subfamily.

The protein localises to the endoplasmic reticulum membrane. It is found in the cell projection. It localises to the dendrite. It catalyses the reaction a very-long-chain acyl-CoA + malonyl-CoA + H(+) = a very-long-chain 3-oxoacyl-CoA + CO2 + CoA. The enzyme catalyses (6Z,9Z,12Z)-octadecatrienoyl-CoA + malonyl-CoA + H(+) = (8Z,11Z,14Z)-3-oxoeicosatrienoyl-CoA + CO2 + CoA. The catalysed reaction is (9Z,12Z,15Z)-octadecatrienoyl-CoA + malonyl-CoA + H(+) = (11Z,14Z,17Z)-3-oxoeicosatrienoyl-CoA + CO2 + CoA. It carries out the reaction (9Z)-hexadecenoyl-CoA + malonyl-CoA + H(+) = 3-oxo-(11Z)-octadecenoyl-CoA + CO2 + CoA. It catalyses the reaction (9Z)-octadecenoyl-CoA + malonyl-CoA + H(+) = 3-oxo-(11Z)-eicosenoyl-CoA + CO2 + CoA. The enzyme catalyses (11Z)-octadecenoyl-CoA + malonyl-CoA + H(+) = 3-oxo-(13Z)-eicosenoyl-CoA + CO2 + CoA. The catalysed reaction is (9Z,12Z)-octadecadienoyl-CoA + malonyl-CoA + H(+) = (11Z,14Z)-3-oxoicosa-11,14-dienoyl-CoA + CO2 + CoA. It carries out the reaction (6Z,9Z,12Z,15Z)-octadecatetraenoyl-CoA + malonyl-CoA + H(+) = (8Z,11Z,14Z,17Z)-3-oxoicosatetraenoyl-CoA + CO2 + CoA. It catalyses the reaction (5Z,8Z,11Z,14Z)-eicosatetraenoyl-CoA + malonyl-CoA + H(+) = (7Z,10Z,13Z,16Z)-3-oxodocosatetraenoyl-CoA + CO2 + CoA. The enzyme catalyses (5Z,8Z,11Z,14Z,17Z)-eicosapentaenoyl-CoA + malonyl-CoA + H(+) = 3-oxo-(7Z,10Z,13Z,16Z,19Z)-docosapentaenoyl-CoA + CO2 + CoA. It functions in the pathway lipid metabolism; polyunsaturated fatty acid biosynthesis. Functionally, catalyzes the first and rate-limiting reaction of the four reactions that constitute the long-chain fatty acids elongation cycle. This endoplasmic reticulum-bound enzymatic process allows the addition of 2 carbons to the chain of long- and very long-chain fatty acids (VLCFAs) per cycle. Condensing enzyme that acts specifically toward polyunsaturated acyl-CoA with the higher activity toward C18:3(n-6) acyl-CoA. May participate in the production of monounsaturated and of polyunsaturated VLCFAs of different chain lengths that are involved in multiple biological processes as precursors of membrane lipids and lipid mediators. In conditions where the essential linoleic and alpha linoleic fatty acids are lacking it is also involved in the synthesis of Mead acid from oleic acid. In Xenopus laevis (African clawed frog), this protein is Very long chain fatty acid elongase 5.